We begin with the raw amino-acid sequence, 314 residues long: Lipoyl synthase (314 aa).

Residues Cys55, Cys60, Cys66, Cys81, Cys85, Cys88, and Ser292 each contribute to the [4Fe-4S] cluster site. The 215-residue stretch at 67–281 folds into the Radical SAM core domain; sequence WEDREATFLI…TQYAEGLGFS (215 aa).

This sequence belongs to the radical SAM superfamily. Lipoyl synthase family. Requires [4Fe-4S] cluster as cofactor.

It localises to the cytoplasm. The enzyme catalyses [[Fe-S] cluster scaffold protein carrying a second [4Fe-4S](2+) cluster] + N(6)-octanoyl-L-lysyl-[protein] + 2 oxidized [2Fe-2S]-[ferredoxin] + 2 S-adenosyl-L-methionine + 4 H(+) = [[Fe-S] cluster scaffold protein] + N(6)-[(R)-dihydrolipoyl]-L-lysyl-[protein] + 4 Fe(3+) + 2 hydrogen sulfide + 2 5'-deoxyadenosine + 2 L-methionine + 2 reduced [2Fe-2S]-[ferredoxin]. Its pathway is protein modification; protein lipoylation via endogenous pathway; protein N(6)-(lipoyl)lysine from octanoyl-[acyl-carrier-protein]: step 2/2. Functionally, catalyzes the radical-mediated insertion of two sulfur atoms into the C-6 and C-8 positions of the octanoyl moiety bound to the lipoyl domains of lipoate-dependent enzymes, thereby converting the octanoylated domains into lipoylated derivatives. This Mycobacterium leprae (strain Br4923) protein is Lipoyl synthase.